The primary structure comprises 147 residues: Hemoglobin subunit beta (147 aa).

The 145-residue stretch at 3–147 (HWTAEEKQLI…VAHALARKYH (145 aa)) folds into the Globin domain. Heme b is bound by residues histidine 64 and histidine 93.

The protein belongs to the globin family. As to quaternary structure, heterotetramer of two alpha chains and two beta chains. Red blood cells.

Its function is as follows. Involved in oxygen transport from the lung to the various peripheral tissues. This chain is Hemoglobin subunit beta (HBB), found in Anas platyrhynchos (Mallard).